The following is a 698-amino-acid chain: Probable metal-nicotianamine transporter YSL17 (698 aa).

The tract at residues 1-36 (MAEEARGGQRVVVDDDREDASSVASSTERAFEGEPL) is disordered. 14 helical membrane-spanning segments follow: residues 43-63 (VTAR…VVAM), 67-87 (LTSG…FFLA), 114-134 (IAVV…YILG), 157-177 (IGRV…IIVP), 216-236 (VVTL…QWFF), 277-297 (MITA…WPYI), 322-342 (VFVG…SALV), 395-415 (WVAV…VPLL), 424-444 (VAAA…GVGV), 463-483 (SWVG…GIIV), 511-531 (VGQV…FWVF), 567-587 (LPDH…ALSA), 607-627 (IGVA…AVGC), and 644-664 (LLLP…SLAS).

It belongs to the YSL (TC 2.A.67.2) family. In terms of tissue distribution, expressed at low levels in roots.

Its subcellular location is the membrane. Its function is as follows. May be involved in the transport of nicotianamine-chelated metals. This is Probable metal-nicotianamine transporter YSL17 (YSL17) from Oryza sativa subsp. japonica (Rice).